We begin with the raw amino-acid sequence, 3218 residues long: Serine/threonine-protein kinase Smg1 (3218 aa).

The disordered stretch occupies residues L32–K78. The span at N33–N43 shows a compositional bias: low complexity. The segment covering E44 to G67 has biased composition (gly residues). S70 bears the Phosphoserine mark. Residues D1289 to R1692 enclose the FAT domain. The stretch at A1643–R1678 is one HEAT repeat. The PI3K/PI4K catalytic domain occupies V1897–K2232. A G-loop region spans residues V1903–K1909. Residues G2101–N2109 form a catalytic loop region. The activation loop stretch occupies residues H2121–T2145. Positions Q3186 to V3218 constitute an FATC domain.

The protein belongs to the PI3/PI4-kinase family. As to quaternary structure, component of a post-splicing multiprotein NMD complex. It depends on Mn(2+) as a cofactor.

It localises to the cytoplasm. It catalyses the reaction L-seryl-[protein] + ATP = O-phospho-L-seryl-[protein] + ADP + H(+). The enzyme catalyses L-threonyl-[protein] + ATP = O-phospho-L-threonyl-[protein] + ADP + H(+). Functionally, serine/threonine protein kinase involved in mRNA surveillance. Recognizes the substrate consensus sequence [ST]-Q. Involved in nonsense-mediated decay (NMD) of mRNAs containing premature stop codons, probably by phosphorylating Upf1. This is Serine/threonine-protein kinase Smg1 (nonC) from Drosophila melanogaster (Fruit fly).